A 360-amino-acid polypeptide reads, in one-letter code: Heat-inducible transcription repressor HrcA (360 aa).

It belongs to the HrcA family.

Functionally, negative regulator of class I heat shock genes (grpE-dnaK-dnaJ and groELS operons). Prevents heat-shock induction of these operons. In Mesorhizobium japonicum (strain LMG 29417 / CECT 9101 / MAFF 303099) (Mesorhizobium loti (strain MAFF 303099)), this protein is Heat-inducible transcription repressor HrcA.